The following is a 338-amino-acid chain: Glyceraldehyde-3-phosphate dehydrogenase (338 aa).

NAD(+) contacts are provided by residues 12–13 (RI), D34, and R80. D-glyceraldehyde 3-phosphate contacts are provided by residues 151–153 (SCT), T182, 211–212 (TG), and R234. C152 (nucleophile) is an active-site residue. N316 provides a ligand contact to NAD(+).

This sequence belongs to the glyceraldehyde-3-phosphate dehydrogenase family. As to quaternary structure, homotetramer.

Its subcellular location is the cytoplasm. It carries out the reaction D-glyceraldehyde 3-phosphate + phosphate + NAD(+) = (2R)-3-phospho-glyceroyl phosphate + NADH + H(+). Its pathway is carbohydrate degradation; glycolysis; pyruvate from D-glyceraldehyde 3-phosphate: step 1/5. This Paracoccidioides lutzii (strain ATCC MYA-826 / Pb01) (Paracoccidioides brasiliensis) protein is Glyceraldehyde-3-phosphate dehydrogenase (GPD).